Consider the following 466-residue polypeptide: Cysteine--tRNA ligase (466 aa).

Zn(2+) is bound at residue Cys-29. The 'HIGH' region motif lies at 31-41; it reads ATVQAAPHIGH. Zn(2+) contacts are provided by Cys-208, His-233, and Glu-237. Residues 264–268 carry the 'KMSKS' region motif; the sequence is KMSKS. Lys-267 is a binding site for ATP.

Belongs to the class-I aminoacyl-tRNA synthetase family. As to quaternary structure, monomer. Zn(2+) serves as cofactor.

Its subcellular location is the cytoplasm. The catalysed reaction is tRNA(Cys) + L-cysteine + ATP = L-cysteinyl-tRNA(Cys) + AMP + diphosphate. This is Cysteine--tRNA ligase from Streptomyces griseus subsp. griseus (strain JCM 4626 / CBS 651.72 / NBRC 13350 / KCC S-0626 / ISP 5235).